The following is a 177-amino-acid chain: Early nodulin-like protein 6 (177 aa).

The N-terminal stretch at 1–23 (MGGQKIVLLSIFVCFYVFSLVSC) is a signal peptide. The Phytocyanin domain maps to 24 to 127 (TEFEAGGENG…GQKMIIKVME (104 aa)). Residue Asn-41 is glycosylated (N-linked (GlcNAc...) asparagine). An intrachain disulfide couples Cys-81 to Cys-115. Asn-149 carries the GPI-anchor amidated asparagine lipid modification. The propeptide at 150–177 (HAVRKTSRFLGAGLVTISILVITVFSLV) is removed in mature form.

Belongs to the early nodulin-like (ENODL) family. As to expression, confined to flowers.

It is found in the cell membrane. Functionally, may act as a carbohydrate transporter. This chain is Early nodulin-like protein 6, found in Arabidopsis thaliana (Mouse-ear cress).